The chain runs to 191 residues: Transmembrane protein 17B (191 aa).

4 consecutive transmembrane segments (helical) span residues 50–70 (MSLYFNMWFFPFWWISEVVML), 83–103 (FILITILIVMTLIEAIRLYLG), 115–135 (LAGFWLLTFLLQFPLILFQLF), and 147–167 (GVHIILALFIFAEVLFGFVAL).

Belongs to the TMEM17 family. As to quaternary structure, part of the tectonic-like complex (also named B9 complex).

It is found in the cell projection. Its subcellular location is the cilium membrane. Its function is as follows. Transmembrane component of the tectonic-like complex, a complex localized at the transition zone of primary cilia and acting as a barrier that prevents diffusion of transmembrane proteins between the cilia and plasma membranes. Required for ciliogenesis and sonic hedgehog/SHH signaling. This chain is Transmembrane protein 17B (Tmem17b), found in Danio rerio (Zebrafish).